The sequence spans 197 residues: UPF0056 inner membrane protein YhgN (197 aa).

The Periplasmic segment spans residues 1 to 3; that stretch reads MNE. Residues 4–24 traverse the membrane as a helical segment; the sequence is IISAAVLLILIMDPLGNLPIF. Residues 25-44 are Cytoplasmic-facing; that stretch reads MSVLKHTEPKRRRAIMVREL. A helical transmembrane segment spans residues 45 to 65; it reads LIALLVMLVFLFAGEKILAFL. Residues 66-71 lie on the Periplasmic side of the membrane; the sequence is SLRAET. Residues 72 to 92 form a helical membrane-spanning segment; it reads VSISGGIILFLIAIKMIFPSA. At 93-105 the chain is on the cytoplasmic side; sequence SGNSSGLPAGEEP. Residues 106-126 form a helical membrane-spanning segment; sequence FIVPLAIPLVAGPTILATLML. The Periplasmic segment spans residues 127–138; that stretch reads LSHQYPNQMGHL. A helical membrane pass occupies residues 139–159; that stretch reads VIALLLAWGGTFVILLQSSLF. Residues 160–173 are Cytoplasmic-facing; the sequence is LRLLGEKGVNALER. Residues 174–194 traverse the membrane as a helical segment; that stretch reads LMGLILVMMATQMFLDGIRMW. Residues 195–197 lie on the Periplasmic side of the membrane; sequence MKG.

This sequence belongs to the UPF0056 (MarC) family.

It is found in the cell inner membrane. This Escherichia coli O157:H7 protein is UPF0056 inner membrane protein YhgN (yhgN).